A 235-amino-acid polypeptide reads, in one-letter code: Peptidase E (235 aa).

Active-site charge relay system residues include S122, D137, and H159.

This sequence belongs to the peptidase S51 family.

It localises to the cytoplasm. The catalysed reaction is Dipeptidase E catalyzes the hydrolysis of dipeptides Asp-|-Xaa. It does not act on peptides with N-terminal Glu, Asn or Gln, nor does it cleave isoaspartyl peptides.. Hydrolyzes dipeptides containing N-terminal aspartate residues. May play a role in allowing the cell to use peptide aspartate to spare carbon otherwise required for the synthesis of the aspartate family of amino acids. This chain is Peptidase E, found in Shewanella amazonensis (strain ATCC BAA-1098 / SB2B).